A 305-amino-acid polypeptide reads, in one-letter code: Protein hrde-2 (305 aa).

Disordered stretches follow at residues 211 to 233 and 267 to 305; these read AEMVPSNTTGSSGSPMSTAPVPA and EMSNDEYSPDESENDENEYDYENAARYDDGYDEGHEYCQ. Over residues 215 to 227 the composition is skewed to polar residues; that stretch reads PSNTTGSSGSPMS. Positions 268–287 are enriched in acidic residues; the sequence is MSNDEYSPDESENDENEYDY. A compositionally biased stretch (basic and acidic residues) spans 289–305; that stretch reads NAARYDDGYDEGHEYCQ.

Expressed throughout the male and female germline.

The protein localises to the nucleus. Functionally, plays a role in germline RNA interference (RNAi), and in particular is required for piwi-interacting RNA (piRNA) gene silencing. Facilitates the binding of the argonaut protein hrde-1 to small interfering RNAs (siRNAs) targets that are required for transgenerational epigenetic inheritance and germline immortality. The sequence is that of Protein hrde-2 from Caenorhabditis elegans.